The chain runs to 504 residues: Probable phenylalanine--tRNA ligase beta subunit (504 aa).

Positions 270–346 (IKDKSYLLSI…ICYGFNNINM (77 aa)) constitute a B5 domain. Positions 324, 330, 333, and 334 each coordinate Mg(2+).

Belongs to the phenylalanyl-tRNA synthetase beta subunit family. Type 2 subfamily. Tetramer of two alpha and two beta subunits. Mg(2+) serves as cofactor.

Its subcellular location is the cytoplasm. The enzyme catalyses tRNA(Phe) + L-phenylalanine + ATP = L-phenylalanyl-tRNA(Phe) + AMP + diphosphate + H(+). The chain is Probable phenylalanine--tRNA ligase beta subunit from Vairimorpha ceranae (strain BRL01) (Microsporidian parasite).